We begin with the raw amino-acid sequence, 304 residues long: Mitochondrial glycine transporter (304 aa).

3 Solcar repeats span residues 3–82, 106–186, and 209–293; these read GKSK…VREA, ENLI…LKVA, and SSAM…LVKR. The next 6 membrane-spanning stretches (helical) occupy residues 9 to 34, 57 to 83, 108 to 133, 161 to 184, 213 to 239, and 268 to 286; these read IYAG…TRVQ, GTLP…REAV, LISG…VRYE, GWAA…EQLK, INSV…KTRM, and GLAL…SWCI.

Belongs to the mitochondrial carrier (TC 2.A.29) family. SLC25A38 subfamily.

Its subcellular location is the mitochondrion inner membrane. The enzyme catalyses glycine(in) = glycine(out). Mitochondrial glycine transporter that imports glycine into the mitochondrial matrix. Plays an important role in providing glycine for the first enzymatic step in heme biosynthesis, the condensation of glycine with succinyl-CoA to produce 5-aminolevulinate (ALA) in the mitochondrial matrix. The protein is Mitochondrial glycine transporter of Yarrowia lipolytica (strain CLIB 122 / E 150) (Yeast).